The primary structure comprises 696 residues: Methionine--tRNA ligase (696 aa).

The 'HIGH' region motif lies at 12–22 (PYANGAIHLGH). Positions 143, 146, 156, and 159 each coordinate Zn(2+). Residues 336 to 340 (KMSKS) carry the 'KMSKS' region motif. Lysine 339 contacts ATP. Residues 556–580 (SLAPAPEAQSQQRHAEHQQNEVTAE) form a disordered region. The region spanning 591 to 696 (DFMKVDLRIV…SGAQPGMRVK (106 aa)) is the tRNA-binding domain.

This sequence belongs to the class-I aminoacyl-tRNA synthetase family. MetG type 1 subfamily. As to quaternary structure, homodimer. Zn(2+) is required as a cofactor.

The protein localises to the cytoplasm. The enzyme catalyses tRNA(Met) + L-methionine + ATP = L-methionyl-tRNA(Met) + AMP + diphosphate. Functionally, is required not only for elongation of protein synthesis but also for the initiation of all mRNA translation through initiator tRNA(fMet) aminoacylation. The protein is Methionine--tRNA ligase of Dechloromonas aromatica (strain RCB).